Here is a 473-residue protein sequence, read N- to C-terminus: Siroheme synthase 1 (473 aa).

Residues M1 to V204 are precorrin-2 dehydrogenase /sirohydrochlorin ferrochelatase. NAD(+) contacts are provided by residues E22–I23 and C43–E44. S128 is subject to Phosphoserine. Residues G216–G473 form a uroporphyrinogen-III C-methyltransferase region. Residue P225 participates in S-adenosyl-L-methionine binding. D248 (proton acceptor) is an active-site residue. K270 serves as the catalytic Proton donor. S-adenosyl-L-methionine is bound by residues G301–D303, I306, T331–A332, M382, and G411.

The protein in the N-terminal section; belongs to the precorrin-2 dehydrogenase / sirohydrochlorin ferrochelatase family. This sequence in the C-terminal section; belongs to the precorrin methyltransferase family.

It carries out the reaction uroporphyrinogen III + 2 S-adenosyl-L-methionine = precorrin-2 + 2 S-adenosyl-L-homocysteine + H(+). It catalyses the reaction precorrin-2 + NAD(+) = sirohydrochlorin + NADH + 2 H(+). The enzyme catalyses siroheme + 2 H(+) = sirohydrochlorin + Fe(2+). It participates in cofactor biosynthesis; adenosylcobalamin biosynthesis; precorrin-2 from uroporphyrinogen III: step 1/1. The protein operates within cofactor biosynthesis; adenosylcobalamin biosynthesis; sirohydrochlorin from precorrin-2: step 1/1. Its pathway is porphyrin-containing compound metabolism; siroheme biosynthesis; precorrin-2 from uroporphyrinogen III: step 1/1. It functions in the pathway porphyrin-containing compound metabolism; siroheme biosynthesis; siroheme from sirohydrochlorin: step 1/1. It participates in porphyrin-containing compound metabolism; siroheme biosynthesis; sirohydrochlorin from precorrin-2: step 1/1. Functionally, multifunctional enzyme that catalyzes the SAM-dependent methylations of uroporphyrinogen III at position C-2 and C-7 to form precorrin-2 via precorrin-1. Then it catalyzes the NAD-dependent ring dehydrogenation of precorrin-2 to yield sirohydrochlorin. Finally, it catalyzes the ferrochelation of sirohydrochlorin to yield siroheme. In Yersinia pestis (strain Pestoides F), this protein is Siroheme synthase 1.